The chain runs to 298 residues: Mitochondrial 2-oxodicarboxylate carrier (298 aa).

Solcar repeat units follow at residues 10-99 (HETS…YKKF), 106-195 (SPGL…VKNI), and 204-293 (LEFL…TYAW). Transmembrane regions (helical) follow at residues 16–36 (VAAGGSAGLVEICLMHPLDVV), 69–88 (FGFYKGIIPPILAETPKRAV), 112–132 (LIAGLGSGLTEAVVVNPFEVV), 166–186 (GLNKGLTATLGRHGIFNMVYF), 204–224 (LEFLRKFGIGFVSGTMGSVFN), and 276–296 (LGPGGGVMLLVYEYTYAWLQE).

This sequence belongs to the mitochondrial carrier (TC 2.A.29) family.

The protein localises to the mitochondrion inner membrane. The enzyme catalyses 2-oxoadipate(in) + 2-oxoglutarate(out) = 2-oxoadipate(out) + 2-oxoglutarate(in). It catalyses the reaction hexanedioate(in) + 2-oxoglutarate(out) = hexanedioate(out) + 2-oxoglutarate(in). It carries out the reaction L-2-aminoadipate(in) + 2-oxoglutarate(out) = L-2-aminoadipate(out) + 2-oxoglutarate(in). The catalysed reaction is glutarate(in) + 2-oxoglutarate(out) = glutarate(out) + 2-oxoglutarate(in). The enzyme catalyses 2-oxoheptanedioate(in) + 2-oxoglutarate(out) = 2-oxoheptanedioate(out) + 2-oxoglutarate(in). It catalyses the reaction heptanedioate(in) + 2-oxoglutarate(out) = heptanedioate(out) + 2-oxoglutarate(in). It carries out the reaction citrate(in) + 2-oxoglutarate(out) = citrate(out) + 2-oxoglutarate(in). Its function is as follows. Transports dicarboxylates across the inner membranes of mitochondria by a counter-exchange mechanism. Can transport 2-oxoadipate (2-oxohexanedioate), 2-oxoglutarate, adipate (hexanedioate), glutarate, and to a lesser extent, pimelate (heptanedioate), 2-oxopimelate (2-oxoheptanedioate), 2-aminoadipate (2-aminohexanedioate), oxaloacetate, and citrate. Plays a central role in catabolism of lysine, hydroxylysine, and tryptophan, by transporting common metabolite intermediates (such as 2-oxoadipate) into the mitochondria, where it is converted into acetyl-CoA and can enter the citric acid (TCA) cycle. This is Mitochondrial 2-oxodicarboxylate carrier (Slc25a21) from Mus musculus (Mouse).